Consider the following 204-residue polypeptide: ATP-dependent Clp protease proteolytic subunit (204 aa).

S102 acts as the Nucleophile in catalysis. The active site involves H127.

The protein belongs to the peptidase S14 family. As to quaternary structure, fourteen ClpP subunits assemble into 2 heptameric rings which stack back to back to give a disk-like structure with a central cavity, resembling the structure of eukaryotic proteasomes.

The protein localises to the cytoplasm. The enzyme catalyses Hydrolysis of proteins to small peptides in the presence of ATP and magnesium. alpha-casein is the usual test substrate. In the absence of ATP, only oligopeptides shorter than five residues are hydrolyzed (such as succinyl-Leu-Tyr-|-NHMec, and Leu-Tyr-Leu-|-Tyr-Trp, in which cleavage of the -Tyr-|-Leu- and -Tyr-|-Trp bonds also occurs).. Functionally, cleaves peptides in various proteins in a process that requires ATP hydrolysis. Has a chymotrypsin-like activity. Plays a major role in the degradation of misfolded proteins. The chain is ATP-dependent Clp protease proteolytic subunit from Neisseria meningitidis serogroup A / serotype 4A (strain DSM 15465 / Z2491).